Here is a 245-residue protein sequence, read N- to C-terminus: GDSL esterase/lipase At4g16220 (245 aa).

An N-terminal signal peptide occupies residues 1 to 24 (MSSLVSRCQVIALLVLFFFGVCLA). The Nucleophile role is filled by serine 37.

This sequence belongs to the 'GDSL' lipolytic enzyme family.

It is found in the secreted. The sequence is that of GDSL esterase/lipase At4g16220 from Arabidopsis thaliana (Mouse-ear cress).